Reading from the N-terminus, the 215-residue chain is Dual specificity phosphatase 29 (215 aa).

One can recognise a Tyrosine-protein phosphatase domain in the interval 53–201; the sequence is HVNEVWPRLH…LRELDKQLVK (149 aa). 145–152 is a substrate binding site; sequence HCAMGRSR. C146 (phosphocysteine intermediate) is an active-site residue.

Belongs to the protein-tyrosine phosphatase family. Non-receptor class dual specificity subfamily. As to quaternary structure, homodimer. Interacts with PRKAA2.

The protein resides in the cytoplasm. Its subcellular location is the nucleus. The enzyme catalyses O-phospho-L-tyrosyl-[protein] + H2O = L-tyrosyl-[protein] + phosphate. The catalysed reaction is O-phospho-L-seryl-[protein] + H2O = L-seryl-[protein] + phosphate. It carries out the reaction O-phospho-L-threonyl-[protein] + H2O = L-threonyl-[protein] + phosphate. Dual specificity phosphatase able to dephosphorylate phosphotyrosine, phosphoserine and phosphothreonine residues within the same substrate, with a preference for phosphotyrosine as a substrate. Involved in the modulation of intracellular signaling cascades. In skeletal muscle regulates systemic glucose homeostasis by activating, AMPK, an energy sensor protein kinase. Affects MAP kinase signaling though modulation of the MAPK1/2 cascade in skeletal muscle promoting muscle cell differentiation, development and atrophy. The sequence is that of Dual specificity phosphatase 29 (Dusp29) from Rattus norvegicus (Rat).